The sequence spans 951 residues: Leucine-rich repeat-containing G-protein coupled receptor 4 (951 aa).

The first 19 residues, 1–19 (MPGPLGLLCFLALGLRGSA), serve as a signal peptide directing secretion. At 20-544 (EPSGAAPPLC…LLGSWMIRLT (525 aa)) the chain is on the extracellular side. An LRRNT domain is found at 25 to 57 (APPLCAAPCSCDGDRRVDCSGKGLTAVPEGLSA). Cystine bridges form between Cys-29–Cys-35 and Cys-33–Cys-43. 11 LRR repeats span residues 35–58 (CDGD…LSAF), 59–79 (TQLL…AFKN), 81–103 (PFLE…ALSG), 104–127 (LKEL…AIRG), 128–151 (LSSL…SFEG), 153–175 (TQLR…PLSN), 176–199 (LPTL…AFTN), 201–223 (SSLV…CFDG), 224–247 (LDNL…IKAL), 248–270 (PSLK…AFDG), and 272–294 (PLLK…AFHN). Residue Asn-68 is glycosylated (N-linked (GlcNAc...) asparagine). An N-linked (GlcNAc...) asparagine glycan is attached at Asn-199. 2 N-linked (GlcNAc...) asparagine glycosylation sites follow: Asn-294 and Asn-314. 5 LRR repeats span residues 318 to 341 (TVRL…LCQE), 342 to 363 (QKRL…SFNG), 364 to 387 (CHAL…TFQG), 388 to 411 (LTSL…AFAK), and 413 to 435 (GSIT…GLNG). A disulfide bond links Cys-339 and Cys-364. Intrachain disulfides connect Cys-470–Cys-522 and Cys-471–Cys-476. A helical membrane pass occupies residues 545–565 (VWFIFLVALFFNLLVILTTFA). Topologically, residues 566 to 575 (SCTSVPSSKL) are cytoplasmic. A helical membrane pass occupies residues 576–596 (FIGLISVSNLFMGAYTGILTF). Residues 597-619 (LDAVSWGRFAEFGIWWEIGSGCK) are Extracellular-facing. The cysteines at positions 618 and 693 are disulfide-linked. A helical transmembrane segment spans residues 620-640 (IAGFLAVFSSESAIFLLMLAA). At 641–661 (VERSLSAKDMMKNGKSNHLRQ) the chain is on the cytoplasmic side. A helical membrane pass occupies residues 662–682 (FRIAALLAFLGAAVAGSFPLF). The Extracellular segment spans residues 683-703 (HRGEYSASPLCLPFPTGETPS). Residues 704-724 (LGFTVTLVLLNSLAFLLMAII) traverse the membrane as a helical segment. Residues 725-756 (YTKLYCNLEKEDLSESSQSSMIKHVAWLIFTN) are Cytoplasmic-facing. The chain crosses the membrane as a helical span at residues 757–777 (CIFFCPVAFFSFAPLITAVSI). At 778 to 783 (SPEIMK) the chain is on the extracellular side. Residues 784–804 (SVTLIFFPLPACLNPVLYVFF) traverse the membrane as a helical segment. The Cytoplasmic portion of the chain corresponds to 805–951 (NPKFKEDWKL…YAYNLPRVKD (147 aa)). Phosphoserine is present on Ser-920.

The protein belongs to the G-protein coupled receptor 1 family.

The protein resides in the cell membrane. Receptor for R-spondins that potentiates the canonical Wnt signaling pathway and is involved in the formation of various organs. Upon binding to R-spondins (RSPO1, RSPO2, RSPO3 or RSPO4), associates with phosphorylated LRP6 and frizzled receptors that are activated by extracellular Wnt receptors, triggering the canonical Wnt signaling pathway to increase expression of target genes. In contrast to classical G-protein coupled receptors, does not activate heterotrimeric G-proteins to transduce the signal. Its function as activator of the Wnt signaling pathway is required for the development of various organs, including liver, kidney, intestine, bone, reproductive tract and eye. May also act as a receptor for norrin (NDP), such results however required additional confirmation in vivo. Required during spermatogenesis to activate the Wnt signaling pathway in peritubular myoid cells. Required for the maintenance of intestinal stem cells and Paneth cell differentiation in postnatal intestinal crypts. Acts as a regulator of bone formation and remodeling. Involved in kidney development; required for maintaining the ureteric bud in an undifferentiated state. Involved in the development of the anterior segment of the eye. Required during erythropoiesis. Also acts as a negative regulator of innate immunity by inhibiting TLR2/TLR4 associated pattern-recognition and pro-inflammatory cytokine production. Plays an important role in regulating the circadian rhythms of plasma lipids, partially through regulating the rhythmic expression of MTTP. Required for proper development of GnRH neurons (gonadotropin-releasing hormone expressing neurons) that control the release of reproductive hormones from the pituitary gland. The polypeptide is Leucine-rich repeat-containing G-protein coupled receptor 4 (LGR4) (Bos taurus (Bovine)).